A 681-amino-acid chain; its full sequence is MCGIFAYLNYHVPRTRREILETLIKGLQRLEYRGYDSAGVGLDGGNDKDWEANACKIQLIKKKGKVKALDEEVHKQQDMDLDIEFDVHLGIAHTRWATHGEPSPVNSHPQRSDKNNEFIVIHNGIITNYKDLKKFLESKGYDFESETDTETIAKLVKYMYDNWESQDVSFTTLVERVIQQLEGAFALVFKSVHFPGQAVGTRRGSPLLIGVRSEHKLSTDHIPILYRTGKDKKGSCGLSRVDSTTCLFPVEEKAVEYYFASDASAVIEHTNRVIFLEDDDVAAVVDGRLSIHRIKRTARDHPGRAVQTLQMELQQIMKGNFSSFMQKEIFEQPESVVNTMRGRVNFDDYTVNLGGLKDHIKEIQRCRRLILIACGTSYHAGMATRQVLEELTELPVMVELASDFLDRNTPVFRDDVCFFISQSGETADTLMGLRYCKERGALTVGITNTVGSSISRETDCGVHINAGPEIGVASTKAYTSQFVSLVMFALMMCDDRISMQERRKEIMLGLKRLPDLIKEVLSMDDEIQKLATELYHQKSVLIMGRGYHYATCLEGALKIKEITYMHSEGILAGELKHGPLALVDKLMPVIMIIMRDHTYAKCQNALQQVVARQGRPVVICDKEDTETIKNTKRTIKVPHSVDCLQGILSVIPLQLLAFHLAVLRGYDVDFPRNLAKSVTVE.

C2 serves as the catalytic For GATase activity. The 286-residue stretch at 2 to 287 (CGIFAYLNYH…DDDVAAVVDG (286 aa)) folds into the Glutamine amidotransferase type-2 domain. Phosphoserine is present on residues S103 and S243. The segment at 295-662 (KRTARDHPGR…LQLLAFHLAV (368 aa)) is isomerase. SIS domains are found at residues 359 to 498 (HIKE…DRIS) and 530 to 671 (LATE…VDFP). Residues 376 to 377 (TS), 421 to 423 (SQS), T426, and H577 contribute to the substrate site.

Homotetramer, may also exist as homodimers.

The enzyme catalyses D-fructose 6-phosphate + L-glutamine = D-glucosamine 6-phosphate + L-glutamate. It participates in nucleotide-sugar biosynthesis; UDP-N-acetyl-alpha-D-glucosamine biosynthesis; alpha-D-glucosamine 6-phosphate from D-fructose 6-phosphate: step 1/1. With respect to regulation, inhibited by 4,4'-dithiodipyridine. Its function is as follows. Controls the flux of glucose into the hexosamine pathway. Most likely involved in regulating the availability of precursors for N- and O-linked glycosylation of proteins. Regulates the circadian expression of clock genes BMAL1 and CRY1. Has a role in fine tuning the metabolic fluctuations of cytosolic UDP-GlcNAc and its effects on hyaluronan synthesis that occur during tissue remodeling. This Rattus norvegicus (Rat) protein is Glutamine--fructose-6-phosphate aminotransferase [isomerizing] 1 (Gfpt1).